The sequence spans 195 residues: Imidazoleglycerol-phosphate dehydratase (195 aa).

It belongs to the imidazoleglycerol-phosphate dehydratase family.

The protein localises to the cytoplasm. It carries out the reaction D-erythro-1-(imidazol-4-yl)glycerol 3-phosphate = 3-(imidazol-4-yl)-2-oxopropyl phosphate + H2O. It participates in amino-acid biosynthesis; L-histidine biosynthesis; L-histidine from 5-phospho-alpha-D-ribose 1-diphosphate: step 6/9. The chain is Imidazoleglycerol-phosphate dehydratase from Aminomonas aminovorus.